The chain runs to 240 residues: Fibronectin type III domain-containing protein 5 (240 aa).

Residues methionine 1 to arginine 10 are compositionally biased toward gly residues. Residues methionine 1 to proline 33 are disordered. The segment covering proline 11–arginine 24 has biased composition (basic and acidic residues). The Fibronectin type-III domain occupies alanine 64 to glutamate 155. 2 N-linked (GlcNAc...) asparagine glycosylation sites follow: asparagine 67 and asparagine 112. A helical transmembrane segment spans residues glycine 181–cysteine 201. Residues asparagine 210 to serine 221 show a composition bias toward basic and acidic residues. The segment at asparagine 210–isoleucine 240 is disordered. Gly residues predominate over residues glutamine 231–isoleucine 240. Residues serine 238 to isoleucine 240 carry the Microbody targeting signal motif.

As to quaternary structure, dimer; may exist in other oligomeric forms. Post-translationally, the extracellular domain is cleaved and released from the cell membrane. In terms of processing, N-Glycosylated. As to expression, in adult, it is highly expressed in skeletal muscle, heart and brain.

It localises to the cell membrane. Its subcellular location is the peroxisome membrane. It is found in the secreted. Mediates beneficial effects of muscular exercise. Induces browning of white adipose tissue by stimulating UCP1 expression, at least in part, via the nuclear receptor PPARA. The chain is Fibronectin type III domain-containing protein 5 (Fndc5) from Mus musculus (Mouse).